The following is a 339-amino-acid chain: NADPH dehydrogenase (339 aa).

FMN is bound at residue 21-24; that stretch reads PPMC. Y26 lines the substrate pocket. Residues A57 and Q99 each coordinate FMN. A substrate-binding site is contributed by 162–165; it reads HGAH. FMN-binding positions include R215 and 307 to 308; that span reads GR.

This sequence belongs to the NADH:flavin oxidoreductase/NADH oxidase family. NamA subfamily. In terms of assembly, homotetramer. It depends on FMN as a cofactor.

The catalysed reaction is A + NADPH + H(+) = AH2 + NADP(+). Its function is as follows. Catalyzes the reduction of the double bond of an array of alpha,beta-unsaturated aldehydes and ketones. It also reduces the nitro group of nitroester and nitroaromatic compounds. It could have a role in detoxification processes. This is NADPH dehydrogenase from Clostridium acetobutylicum (strain ATCC 824 / DSM 792 / JCM 1419 / IAM 19013 / LMG 5710 / NBRC 13948 / NRRL B-527 / VKM B-1787 / 2291 / W).